We begin with the raw amino-acid sequence, 132 residues long: D-ribose pyranase (132 aa).

The active-site Proton donor is the His20. Substrate contacts are provided by residues Asp28, His99, and 121–123; that span reads YSN.

The protein belongs to the RbsD / FucU family. RbsD subfamily. In terms of assembly, homodecamer.

Its subcellular location is the cytoplasm. The enzyme catalyses beta-D-ribopyranose = beta-D-ribofuranose. The protein operates within carbohydrate metabolism; D-ribose degradation; D-ribose 5-phosphate from beta-D-ribopyranose: step 1/2. Its function is as follows. Catalyzes the interconversion of beta-pyran and beta-furan forms of D-ribose. The protein is D-ribose pyranase of Pseudomonas putida (strain W619).